We begin with the raw amino-acid sequence, 242 residues long: Probable transcriptional regulatory protein LSL_0422 (242 aa).

A disordered region spans residues 1–21 (MSGHSKWHNIQGRKNAQDAKR).

The protein belongs to the TACO1 family.

It is found in the cytoplasm. The sequence is that of Probable transcriptional regulatory protein LSL_0422 from Ligilactobacillus salivarius (strain UCC118) (Lactobacillus salivarius).